A 393-amino-acid chain; its full sequence is Argininosuccinate synthase (393 aa).

ATP-binding positions include A10–S18 and A37. Y88 contributes to the L-citrulline binding site. G118 serves as a coordination point for ATP. Positions 120, 124, and 125 each coordinate L-aspartate. N124 serves as a coordination point for L-citrulline. L-citrulline contacts are provided by R128, S176, S185, E261, and Y273.

It belongs to the argininosuccinate synthase family. Type 1 subfamily. In terms of assembly, homotetramer.

Its subcellular location is the cytoplasm. It carries out the reaction L-citrulline + L-aspartate + ATP = 2-(N(omega)-L-arginino)succinate + AMP + diphosphate + H(+). The protein operates within amino-acid biosynthesis; L-arginine biosynthesis; L-arginine from L-ornithine and carbamoyl phosphate: step 2/3. The protein is Argininosuccinate synthase of Carsonella ruddii (strain PV).